The primary structure comprises 1078 residues: A type blood alpha-D-galactosamine galactosaminidase (1078 aa).

The first 26 residues, 1 to 26 (MRGKKFISLTLSTMLCLQLLPTASFA), serve as a signal peptide directing secretion. Residues 306-570 (PDSSYDLRWE…NNIWYPSAVG (265 aa)) are glycoside hydrolase 36 domain. The active-site Nucleophile is the D463. D532 is an active-site residue. A not required for activity on soluble substrates region spans residues 699–1078 (PDPEPVDPDY…LDYLTYTTNA (380 aa)).

It belongs to the glycosyl hydrolase 36 family.

It catalyses the reaction an alpha-D-galactosaminyl-(1-&gt;3)-[alpha-L-fucosyl-(1-&gt;2)]-beta-D-galactosyl derivative + H2O = D-galactosamine + an alpha-L-fucosyl-(1-&gt;2)-beta-D-galactosyl derivative. One of an enzyme pair that work together to convert the A antigen to the H antigen of the O blood type, which together release galactosamine. Catalyzes the second step in the conversion, acts on the product of the first reaction (FpGalNAcDeAc, AC P0DTR4). Is specific for galactosamine containing sugars, does not cleave GalNAc residues. The polypeptide is A type blood alpha-D-galactosamine galactosaminidase (Flavonifractor plautii (Fusobacterium plautii)).